The chain runs to 508 residues: Anaerobic nitric oxide reductase transcription regulator NorR (508 aa).

Asp-56 carries the post-translational modification 4-aspartylphosphate. Positions 186 to 415 (MIGQSPAMAR…LEHAIHRAAV (230 aa)) constitute a Sigma-54 factor interaction domain. Residues 214-221 (GETGVGKE) and 277-286 (ADQGTLFLDE) each bind ATP. Positions 483-502 (WAATARALELDSGNLHRLAK) form a DNA-binding region, H-T-H motif.

It participates in nitrogen metabolism; nitric oxide reduction. In terms of biological role, required for the expression of anaerobic nitric oxide (NO) reductase, acts as a transcriptional activator for at least the norVW operon. Activation also requires sigma-54. This Aeromonas hydrophila subsp. hydrophila (strain ATCC 7966 / DSM 30187 / BCRC 13018 / CCUG 14551 / JCM 1027 / KCTC 2358 / NCIMB 9240 / NCTC 8049) protein is Anaerobic nitric oxide reductase transcription regulator NorR.